A 315-amino-acid polypeptide reads, in one-letter code: Aspartate carbamoyltransferase catalytic subunit (315 aa).

Carbamoyl phosphate is bound by residues Arg-64 and Thr-65. Lys-92 contacts L-aspartate. Positions 114, 142, and 145 each coordinate carbamoyl phosphate. Positions 175 and 229 each coordinate L-aspartate. Gly-270 and Pro-271 together coordinate carbamoyl phosphate.

Belongs to the aspartate/ornithine carbamoyltransferase superfamily. ATCase family. In terms of assembly, heterododecamer (2C3:3R2) of six catalytic PyrB chains organized as two trimers (C3), and six regulatory PyrI chains organized as three dimers (R2).

It catalyses the reaction carbamoyl phosphate + L-aspartate = N-carbamoyl-L-aspartate + phosphate + H(+). Its pathway is pyrimidine metabolism; UMP biosynthesis via de novo pathway; (S)-dihydroorotate from bicarbonate: step 2/3. Its function is as follows. Catalyzes the condensation of carbamoyl phosphate and aspartate to form carbamoyl aspartate and inorganic phosphate, the committed step in the de novo pyrimidine nucleotide biosynthesis pathway. The sequence is that of Aspartate carbamoyltransferase catalytic subunit from Xanthobacter autotrophicus (strain ATCC BAA-1158 / Py2).